A 191-amino-acid polypeptide reads, in one-letter code: Xanthine phosphoribosyltransferase (191 aa).

Positions 20 and 27 each coordinate xanthine. 128–132 (ANGQA) is a 5-phospho-alpha-D-ribose 1-diphosphate binding site. Lysine 156 provides a ligand contact to xanthine.

Belongs to the purine/pyrimidine phosphoribosyltransferase family. Xpt subfamily. In terms of assembly, homodimer.

Its subcellular location is the cytoplasm. The catalysed reaction is XMP + diphosphate = xanthine + 5-phospho-alpha-D-ribose 1-diphosphate. It participates in purine metabolism; XMP biosynthesis via salvage pathway; XMP from xanthine: step 1/1. Its function is as follows. Converts the preformed base xanthine, a product of nucleic acid breakdown, to xanthosine 5'-monophosphate (XMP), so it can be reused for RNA or DNA synthesis. The chain is Xanthine phosphoribosyltransferase from Acinetobacter baumannii (strain AB307-0294).